A 387-amino-acid chain; its full sequence is 3-ketoacyl-CoA thiolase (387 aa).

Residue cysteine 91 is the Acyl-thioester intermediate of the active site. Active-site proton acceptor residues include histidine 343 and cysteine 373.

It belongs to the thiolase-like superfamily. Thiolase family. In terms of assembly, heterotetramer of two alpha chains (FadB) and two beta chains (FadA).

The protein localises to the cytoplasm. The catalysed reaction is an acyl-CoA + acetyl-CoA = a 3-oxoacyl-CoA + CoA. The protein operates within lipid metabolism; fatty acid beta-oxidation. Its function is as follows. Catalyzes the final step of fatty acid oxidation in which acetyl-CoA is released and the CoA ester of a fatty acid two carbons shorter is formed. This is 3-ketoacyl-CoA thiolase from Shewanella sp. (strain MR-4).